Here is a 316-residue protein sequence, read N- to C-terminus: DnaJ homolog subfamily B member 13 (316 aa).

In terms of domain architecture, J spans 4–68; the sequence is DYYSVLGITR…MKRGIYDKFG (65 aa).

Homodimer. Component of the axonemal radial spoke complex 1 (RS1), at least composed of spoke head proteins RSPH1, RSPH3, RSPH9 and the cilia-specific component RSPH4A or sperm-specific component RSPH6A, spoke stalk proteins RSPH14, DNAJB13, DYDC1, ROPN1L and NME5, and the anchor protein IQUB. Interacts with SUN5. Interacts with IQUB. As to expression, specifically expressed in testis and trachea.

Its subcellular location is the cell projection. It is found in the cilium. The protein resides in the flagellum. Functionally, functions as part of axonemal radial spoke complexes that play an important part in the motility of sperm and cilia. The protein is DnaJ homolog subfamily B member 13 (DNAJB13) of Homo sapiens (Human).